The primary structure comprises 1594 residues: Calpain-D (1594 aa).

RanBP2-type zinc fingers lie at residues 1–35 (MGTI…VRKV) and 135–164 (LNRR…VSYL). Disordered stretches follow at residues 210 to 256 (EEQH…TAID), 371 to 400 (EPQQ…NPTQ), 420 to 459 (ASSS…SSSG), 524 to 543 (KKKQ…GSGE), and 554 to 606 (AGLG…RLSG). Over residues 215-229 (HQLHSQHLHKRHLKG) the composition is skewed to basic residues. Composition is skewed to polar residues over residues 246–255 (RRTQSLSTAI) and 371–385 (EPQQ…QLQR). S250 carries the phosphoserine modification. Low complexity predominate over residues 438-459 (NSNSNSSGNSNIINNNSSSSSG). A compositionally biased stretch (polar residues) spans 528–541 (QIASESQTNNNTGS). The segment at 643–673 (RSKMWICIKCSYAYNRLWLQTCEMCEAKAEQ) adopts a RanBP2-type 3 zinc-finger fold. The tract at residues 684–703 (QQQQQQHHHHHLQQQQAEAP) is disordered. 2 consecutive RanBP2-type zinc fingers follow at residues 704–733 (RDEP…SKLK) and 744–774 (RKGE…HRQP). Disordered regions lie at residues 786-811 (RPDG…HQSG) and 860-884 (SLQQ…GSIV). Residues 860-871 (SLQQQRNSSSSG) are compositionally biased toward polar residues. The RanBP2-type 6 zinc-finger motif lies at 927–956 (STKKWQCPACTYDNCAASVVCDICSSPRGL). The Calpain catalytic domain occupies 1014–1321 (LFVDDSFPPA…FDCIDICKVR (308 aa)). Active-site residues include C1079, H1245, and N1265.

Belongs to the peptidase C2 family.

Its function is as follows. Has a role in eye development. Calcium-regulated non-lysosomal thiol-protease. The chain is Calpain-D (sol) from Drosophila melanogaster (Fruit fly).